A 167-amino-acid chain; its full sequence is NAD(P)H-quinone oxidoreductase subunit I, chloroplastic (167 aa).

4Fe-4S ferredoxin-type domains are found at residues 55 to 84 (GRIH…VDWK) and 95 to 124 (LNYS…MTEE). Residues Cys-64, Cys-67, Cys-70, Cys-74, Cys-104, Cys-107, Cys-110, and Cys-114 each contribute to the [4Fe-4S] cluster site.

The protein belongs to the complex I 23 kDa subunit family. As to quaternary structure, NDH is composed of at least 16 different subunits, 5 of which are encoded in the nucleus. It depends on [4Fe-4S] cluster as a cofactor.

It is found in the plastid. The protein localises to the chloroplast thylakoid membrane. It carries out the reaction a plastoquinone + NADH + (n+1) H(+)(in) = a plastoquinol + NAD(+) + n H(+)(out). The enzyme catalyses a plastoquinone + NADPH + (n+1) H(+)(in) = a plastoquinol + NADP(+) + n H(+)(out). Its function is as follows. NDH shuttles electrons from NAD(P)H:plastoquinone, via FMN and iron-sulfur (Fe-S) centers, to quinones in the photosynthetic chain and possibly in a chloroplast respiratory chain. The immediate electron acceptor for the enzyme in this species is believed to be plastoquinone. Couples the redox reaction to proton translocation, and thus conserves the redox energy in a proton gradient. This Aethionema grandiflorum (Persian stone-cress) protein is NAD(P)H-quinone oxidoreductase subunit I, chloroplastic.